The chain runs to 271 residues: Formamidopyrimidine-DNA glycosylase (271 aa).

Catalysis depends on Pro-2, which acts as the Schiff-base intermediate with DNA. The active-site Proton donor is Glu-3. Lys-58 functions as the Proton donor; for beta-elimination activity in the catalytic mechanism. DNA-binding residues include His-92, Arg-111, and Arg-152. An FPG-type zinc finger spans residues 237–271 (MVYGREGEACRHCGGELKHATIGQRATVWCAACQR). The Proton donor; for delta-elimination activity role is filled by Arg-261.

Belongs to the FPG family. In terms of assembly, monomer. It depends on Zn(2+) as a cofactor.

The enzyme catalyses Hydrolysis of DNA containing ring-opened 7-methylguanine residues, releasing 2,6-diamino-4-hydroxy-5-(N-methyl)formamidopyrimidine.. It catalyses the reaction 2'-deoxyribonucleotide-(2'-deoxyribose 5'-phosphate)-2'-deoxyribonucleotide-DNA = a 3'-end 2'-deoxyribonucleotide-(2,3-dehydro-2,3-deoxyribose 5'-phosphate)-DNA + a 5'-end 5'-phospho-2'-deoxyribonucleoside-DNA + H(+). Its function is as follows. Involved in base excision repair of DNA damaged by oxidation or by mutagenic agents. Acts as a DNA glycosylase that recognizes and removes damaged bases. Has a preference for oxidized purines, such as 7,8-dihydro-8-oxoguanine (8-oxoG). Has AP (apurinic/apyrimidinic) lyase activity and introduces nicks in the DNA strand. Cleaves the DNA backbone by beta-delta elimination to generate a single-strand break at the site of the removed base with both 3'- and 5'-phosphates. The polypeptide is Formamidopyrimidine-DNA glycosylase (Xanthomonas campestris pv. campestris (strain ATCC 33913 / DSM 3586 / NCPPB 528 / LMG 568 / P 25)).